The following is a 686-amino-acid chain: Glycine--tRNA ligase beta subunit (686 aa).

Residues 65-99 are disordered; sequence ALSEEKRGPSVERAKDENGEWSKAAQGFARGQGAT. The segment covering 67–84 has biased composition (basic and acidic residues); that stretch reads SEEKRGPSVERAKDENGE.

Belongs to the class-II aminoacyl-tRNA synthetase family. Tetramer of two alpha and two beta subunits.

It localises to the cytoplasm. The catalysed reaction is tRNA(Gly) + glycine + ATP = glycyl-tRNA(Gly) + AMP + diphosphate. The polypeptide is Glycine--tRNA ligase beta subunit (Leuconostoc citreum (strain KM20)).